A 340-amino-acid polypeptide reads, in one-letter code: Pilin (340 aa).

The signal sequence occupies residues 1-23; the sequence is MKLRHLLLTGAALTSFAATTVHG. 2 consecutive cross-links (isoaspartyl lysine isopeptide (Lys-Asn)) follow at residues 36 to 168 and 179 to 303; these read KNLD…QFKN and KKVS…TFTN. Residue K161 forms a Threonyl lysine isopeptide (Lys-Thr) (interchain with T-311) linkage. The short motif at 308–312 is the EVPTG sorting signal element; it reads EVPTG. T311 is modified (pentaglycyl murein peptidoglycan amidated threonine; alternate). A Threonyl lysine isopeptide (Thr-Lys) (interchain with K-161); alternate cross-link involves residue T311. The propeptide at 312-340 is removed by sortase C1; that stretch reads GVAMTVAPYIALGIVAVGGALYFVKKKNA.

The protein belongs to the Streptococcus pilin family. As to quaternary structure, forms columns of about 3-nanometers in diameter of head-to-tail-assembled molecules. In terms of processing, proteolytically processed and assembled in pili through a transpeptidation reaction catalyzed by the sortase C1. The last pilin subunit is cross-linked to the peptidoglycan.

Its subcellular location is the secreted. It localises to the cell wall. The protein localises to the fimbrium. Major component of the pilus. A stack of the pilin subunits, joined by intermolecular isopeptide bonds, forms the pilus. The pilus is required for bacterial adhesion to host cells, for bacterial aggregation, and for biofilm formation. The polypeptide is Pilin (Streptococcus pyogenes serotype M1).